The sequence spans 201 residues: MICOS complex subunit MIC27 (201 aa).

The transit peptide at 1–31 (MTQDKPIVETISNAGEQVTNVFGQFWQLVTS) directs the protein to the mitochondrion. At 32–117 (KNTTNNGDSK…KCNAYLTEEW (86 aa)) the chain is on the cytoplasmic side. Residues 118–138 (TALPKAAAITVGGMAGFVLGL) traverse the membrane as a helical segment. Topologically, residues 139–145 (KRGPVGR) are mitochondrial intermembrane. Residues 146–166 (LLTTTIGLATMAAFCYPIEAV) form a helical membrane-spanning segment. Residues 167-201 (DVAKTGRAHAEQTWYSFQESPTPSAIVKTNLSPPK) are Cytoplasmic-facing.

Belongs to the apolipoprotein O/MICOS complex subunit Mic27 family. Component of the mitochondrial contact site and cristae organizing system (MICOS) complex.

It localises to the mitochondrion outer membrane. Functionally, sustains mitochondrial morphology probably through maintaining cristae morphology. May act as a component of the MICOS complex, a large protein complex of the mitochondria. This Caenorhabditis elegans protein is MICOS complex subunit MIC27.